Consider the following 584-residue polypeptide: 4-hydroxybenzoate decarboxylase subunit C (584 aa).

It belongs to the UbiD family. In terms of assembly, component of the decarboxylase complex composed of the subunits B and C (Potential). The subunit D usually found in other organisms seems to be absent.

It catalyses the reaction 4-hydroxybenzoate + H(+) = phenol + CO2. The enzyme activity is enhanced by Mg(2+), Fe(2+), Mn(2+) and Ca(2+). No stimulation is observed with Cu(2+) and Zn(2+). In terms of biological role, catalyzes the reversible decarboxylation of 4-hydroxybenzoate. The sequence is that of 4-hydroxybenzoate decarboxylase subunit C from Chlamydia pneumoniae (Chlamydophila pneumoniae).